A 705-amino-acid polypeptide reads, in one-letter code: Elongation factor G (705 aa).

The tr-type G domain occupies 6–282 (NKVRNIGIMA…AVVDFLPSPL (277 aa)). Residues 15–22 (AHIDAGKT), 79–83 (DTPGH), and 133–136 (NKMD) contribute to the GTP site.

It belongs to the TRAFAC class translation factor GTPase superfamily. Classic translation factor GTPase family. EF-G/EF-2 subfamily.

The protein resides in the cytoplasm. In terms of biological role, catalyzes the GTP-dependent ribosomal translocation step during translation elongation. During this step, the ribosome changes from the pre-translocational (PRE) to the post-translocational (POST) state as the newly formed A-site-bound peptidyl-tRNA and P-site-bound deacylated tRNA move to the P and E sites, respectively. Catalyzes the coordinated movement of the two tRNA molecules, the mRNA and conformational changes in the ribosome. The sequence is that of Elongation factor G from Corynebacterium glutamicum (strain ATCC 13032 / DSM 20300 / JCM 1318 / BCRC 11384 / CCUG 27702 / LMG 3730 / NBRC 12168 / NCIMB 10025 / NRRL B-2784 / 534).